Reading from the N-terminus, the 427-residue chain is MSRSETLFANAQKHIPGGVNSPVRAFKSVGGTPLFFKHAEGAYVTDEDDKRYVDYVGSWGPMILGHSHPDVLDAVRNQLQHGLSYGAPTAMETEMADLVCSLVPSLEMVRMVSSGTEATMSAIRLARGFTGRDSIIKFEGCYHGHSDSLLVKAGSGALTQGVPSSAGVPAAFAKHTLTLPFNDIDAVEKMLAEVGQDVACIIVEPVAGNMNCVPPAPGFLEGLRSLCDKHGVVLIFDEVMTGFRVALGGAQAYYGVTPDLTTFGKIIGGGMPVGCFGGKRLIMERIAPLGPVYQAGTLSGNPLAMAAGLTTLRLISRPGFHAELTDYTTRLLDGLQQRADAAGIPFVTTQAGGMFGLYFSGADDIVTFEDVMASDAALFGRFFHLMLEGGVYLAPSAFEAGFTSIAHGEAELKLTLDAAERAFAKLK.

An N6-(pyridoxal phosphate)lysine modification is found at K265.

Belongs to the class-III pyridoxal-phosphate-dependent aminotransferase family. HemL subfamily. In terms of assembly, homodimer. Pyridoxal 5'-phosphate serves as cofactor.

It is found in the cytoplasm. It carries out the reaction (S)-4-amino-5-oxopentanoate = 5-aminolevulinate. Its pathway is porphyrin-containing compound metabolism; protoporphyrin-IX biosynthesis; 5-aminolevulinate from L-glutamyl-tRNA(Glu): step 2/2. This Pseudomonas fluorescens (strain Pf0-1) protein is Glutamate-1-semialdehyde 2,1-aminomutase.